Here is a 241-residue protein sequence, read N- to C-terminus: Small ribosomal subunit protein uS2 (241 aa).

Belongs to the universal ribosomal protein uS2 family.

This Escherichia coli (strain 55989 / EAEC) protein is Small ribosomal subunit protein uS2.